The following is a 629-amino-acid chain: Natural resistance-associated macrophage protein 2 homolog (629 aa).

The Cytoplasmic segment spans residues 1–151 (MNNNNNNKKL…KSKFSIKKLK (151 aa)). The segment at 50–119 (NVVNGSIEDS…SDIDSSGDSI (70 aa)) is disordered. Positions 62–85 (QQQQQQQQQQQQQQQQQQQQQQQQ) are enriched in low complexity. A compositionally biased stretch (basic and acidic residues) spans 96-105 (DKPFQDRDSN). Over residues 106-118 (IGDGSDIDSSGDS) the composition is skewed to low complexity. Residues 152-172 (SFLGPALFISVGYMDPGNWAT) form a helical membrane-spanning segment. Residues 173–182 (DLEGGSRFGY) are Extracellular-facing. Residues 183 to 203 (QLMWVLLFSNIMALFLQTLVI) traverse the membrane as a helical segment. Over 204 to 224 (KLALVTKNDLAQQCRKEYSKT) the chain is Cytoplasmic. Residues 225–245 (VNIFLWLILELAIISTDLAEV) traverse the membrane as a helical segment. The Extracellular segment spans residues 246 to 253 (IGTAIGLN). The helical transmembrane segment at 254–274 (ILFGLPLIAGVAITSLDTLLF) threads the bilayer. Residues 275 to 286 (LAIQRWGIRKLE) are Cytoplasmic-facing. Residues 287–307 (LLILLLLSMITMCFVIELFLS) form a helical membrane-spanning segment. The Extracellular segment spans residues 308 to 326 (KPIASEVFSGFVPRLNSDS). Residues 327-347 (VMVATGIVGATTMPHNLFLHG) form a helical membrane-spanning segment. The Cytoplasmic segment spans residues 348 to 376 (SVVKSRKIPNDRRKSVIKQAYRYNVIDTV). The chain crosses the membrane as a helical span at residues 377-397 (LALNCAFFVNIAILMLAASVF). Topologically, residues 398-421 (WKSNIQVTELSEAYRLLTKLMDGK) are extracellular. The helical transmembrane segment at 422–442 (LAAVLFGLGLFLAGQSSTITG) threads the bilayer. The Cytoplasmic portion of the chain corresponds to 443 to 468 (TMAGQIVMEGFIKLRIKPWLRRFITR). The helical transmembrane segment at 469 to 489 (LLAIIPAAIVIIVLGDKGTYT) threads the bilayer. Topologically, residues 490–491 (LL) are extracellular. The helical transmembrane segment at 492-512 (IISQVLLSIGLPFAVVPLIIF) threads the bilayer. Residues 513–527 (TSSYEIMGEFKNRLS) lie on the Cytoplasmic side of the membrane. The helical transmembrane segment at 528 to 548 (IIIINSIIALFIIGLNLATIF) threads the bilayer. The Extracellular portion of the chain corresponds to 549-565 (QLINDFLHNDSIISKCL). N-linked (GlcNAc...) asparagine glycosylation is present at Asn557. The helical transmembrane segment at 566 to 586 (TIIFLIPLSIALCCLLLWLII) threads the bilayer. At 587–629 (SKINFFTNLLSKIFNNNNNNNNKNIINNNNNYSGNTINNQTIQ) the chain is on the cytoplasmic side.

Belongs to the NRAMP family.

It localises to the cell membrane. Its function is as follows. Divalent transition metal (iron and manganese) transporter. This is Natural resistance-associated macrophage protein 2 homolog (nramp2) from Dictyostelium discoideum (Social amoeba).